Consider the following 879-residue polypeptide: Interference hedgehog (879 aa).

An N-terminal signal peptide occupies residues 1-20; the sequence is MTLLTSSLLLFSLLTSRLEA. At 21–703 the chain is on the extracellular side; it reads IPVLEKSPAH…ETFNMSPMLT (683 aa). Ig-like C2-type domains lie at 45 to 142, 132 to 232, 252 to 340, and 346 to 432; these read PGVR…IARL, PLVV…ERIQ, PHLL…YIKV, and PQIV…LQVN. 4 cysteine pairs are disulfide-bonded: Cys-68/Cys-126, Cys-173/Cys-220, Cys-276/Cys-324, and Cys-367/Cys-414. N-linked (GlcNAc...) asparagine glycans are attached at residues Asn-102 and Asn-209. The disordered stretch occupies residues 426–467; it reads GTLLQVNPKQIQEPRESGGTHRPKPNQGSKQKQMYPPSPPNV. Fibronectin type-III domains are found at residues 461-567 and 575-670; these read PPSP…LQPG and VPEL…TQRP. N-linked (GlcNAc...) asparagine glycosylation is present at Asn-466. Heparin is bound by residues Arg-497, Lys-501, Lys-503, and Arg-541. Asn-557 carries N-linked (GlcNAc...) asparagine glycosylation. Residues 662 to 698 form a disordered region; sequence LKQGRTQRPKTSTTEEPTLQMGDRDTTTPSHNETFNM. Polar residues-rich tracts occupy residues 665 to 678 and 688 to 698; these read GRTQ…TEEP and TTPSHNETFNM. N-linked (GlcNAc...) asparagine glycosylation is present at Asn-693. The helical transmembrane segment at 704–724 threads the bilayer; that stretch reads GTLGGGAVLTLLLISICLCVC. The Cytoplasmic segment spans residues 725-879; that stretch reads RRRSSRSRGN…SSGSLNSVGV (155 aa). The tract at residues 728–879 is disordered; sequence SSRSRGNNPN…SSGSLNSVGV (152 aa). 2 stretches are compositionally biased toward low complexity: residues 822-836 and 863-879; these read RAGG…NNNN and SSRS…SVGV.

This sequence belongs to the immunoglobulin superfamily. IHOG family. Homodimer. Heterotetramer; 2 iHog chains bind 2 hh chains when facilitated by heparin, heparin is required to promote high-affinity interactions between hh and iHog.

It is found in the membrane. Its function is as follows. Mediates response to the active Hedgehog (Hh) protein signal in embryos, functioning upstream or at the level of patched (ptc). This Drosophila erecta (Fruit fly) protein is Interference hedgehog.